We begin with the raw amino-acid sequence, 78 residues long: RNA-binding protein Hfq (78 aa).

The Sm domain occupies 10–69; the sequence is DPFLNALRREHVPVSIYLVNGIKLQGQVESFDQYVVLLKNTVTQMVYKHAISTVVPARPV.

It belongs to the Hfq family. In terms of assembly, homohexamer.

Its function is as follows. RNA chaperone that binds small regulatory RNA (sRNAs) and mRNAs to facilitate mRNA translational regulation in response to envelope stress, environmental stress and changes in metabolite concentrations. Also binds with high specificity to tRNAs. The polypeptide is RNA-binding protein Hfq (Dechloromonas aromatica (strain RCB)).